A 219-amino-acid polypeptide reads, in one-letter code: uncharacterized protein (219 aa).

Residues Val-13–Phe-32 form a helical membrane-spanning segment.

The protein resides in the membrane. This is an uncharacterized protein from Aquifex aeolicus (strain VF5).